We begin with the raw amino-acid sequence, 105 residues long: uncharacterized protein (105 aa).

A helical membrane pass occupies residues 25–47 (AHSVTLLFGIFRSSPFLLLFLLI). A disordered region spans residues 54-89 (GRGSQRMKKKRGRANPSENLRERADPTNGPAENGKK).

The protein localises to the membrane. This is an uncharacterized protein from Saccharomyces cerevisiae (strain ATCC 204508 / S288c) (Baker's yeast).